Here is a 699-residue protein sequence, read N- to C-terminus: Receptor-type tyrosine-protein phosphatase epsilon (699 aa).

A signal peptide spans methionine 1–alanine 19. Low complexity predominate over residues glycine 20–threonine 36. Residues glycine 20–proline 40 form a disordered region. Residues glycine 20–serine 45 are Extracellular-facing. N-linked (GlcNAc...) asparagine glycans are attached at residues asparagine 23 and asparagine 31. A helical transmembrane segment spans residues glutamine 46–phenylalanine 68. Residues arginine 69–lysine 699 lie on the Cytoplasmic side of the membrane. 2 consecutive Tyrosine-protein phosphatase domains span residues phenylalanine 134–tyrosine 393 and leucine 425–phenylalanine 688. Substrate is bound by residues aspartate 302, cysteine 334–arginine 340, and glutamine 378. Cysteine 334 (phosphocysteine intermediate) is an active-site residue. Cysteine 629 serves as the catalytic Phosphocysteine intermediate. Position 695 is a phosphotyrosine (tyrosine 695).

It belongs to the protein-tyrosine phosphatase family. Receptor class 4 subfamily. Monomer. Isoform 2: Homodimer. Can form oligomers. Dimerization is increased by oxidative stress and decreased by EGFR. Isoform 2 interacts with GRB2. Post-translationally, a catalytically active cytoplasmic form (p65) is produced by proteolytic cleavage of either isoform 1, isoform 2 or isoform 3. Phosphorylated on tyrosine residues by tyrosine kinase Neu. In terms of processing, glycosylated. As to expression, isoform 2 is expressed in the spleen and thymus (at protein level). Detected in fibroblasts, myeloid cells, macrophages, and T-cells but not in B-cell lines. Isoform 1 and isoform 2 are expressed predominantly in the brain, testes, and lungs, with lower levels present in lymph nodes, thymus, spleen, heart and mammary glands. Isoform 1 is expressed in osteoclasts and not in osteoblasts and its expression is related to osteoclast differentiation. It is also expressed in the erythrocytes. Isoform 2 is strongly expressed in skeletal muscle and L6 skeletal muscle cell line.

It is found in the cell membrane. It localises to the cytoplasm. It catalyses the reaction O-phospho-L-tyrosyl-[protein] + H2O = L-tyrosyl-[protein] + phosphate. Its activity is regulated as follows. Inhibited by alendronate (ALN), orthovanadate, and phenylarsine oxide (PAO). Its function is as follows. Acts as a negative regulator of insulin receptor (IR) signaling and is involved in insulin-induced glucose metabolism mainly through direct dephosphorylation and inactivation of IR in hepatocytes and liver. Plays a critical role in signaling transduction pathways and phosphoprotein network topology in red blood cells. May play a role in osteoclast formation and function. In terms of biological role, acts as a negative regulator of insulin receptor (IR) signaling in skeletal muscle. Regulates insulin-induced tyrosine phosphorylation of insulin receptor (IR) and insulin receptor substrate 1 (IRS-1), phosphorylation of protein kinase B and glycogen synthase kinase-3 and insulin induced stimulation of glucose uptake. Isoform 1 and isoform 2 act as a negative regulator of FceRI-mediated signal transduction leading to cytokine production and degranulation, most likely by acting at the level of SYK to affect downstream events such as phosphorylation of SLP76 and LAT and mobilization of Ca(2+). The protein is Receptor-type tyrosine-protein phosphatase epsilon (Ptpre) of Mus musculus (Mouse).